The following is a 128-amino-acid chain: Ribosome-binding factor A (128 aa).

Belongs to the RbfA family. In terms of assembly, monomer. Binds 30S ribosomal subunits, but not 50S ribosomal subunits or 70S ribosomes.

It is found in the cytoplasm. One of several proteins that assist in the late maturation steps of the functional core of the 30S ribosomal subunit. Associates with free 30S ribosomal subunits (but not with 30S subunits that are part of 70S ribosomes or polysomes). Required for efficient processing of 16S rRNA. May interact with the 5'-terminal helix region of 16S rRNA. The sequence is that of Ribosome-binding factor A from Haemophilus influenzae (strain ATCC 51907 / DSM 11121 / KW20 / Rd).